A 739-amino-acid chain; its full sequence is MSLMLEPNPTQIKEERIYAEMGLTDEEFAMVEKILGRLPNYTETGLFSVMWSEHCSYKNSKPVLRKFPTTGERVLQGPGEGAGIVDIGDNQAVVFKMESHNHPSAIEPYQGAATGVGGIIRDVFSMGARPVALLNSLRFGELQSPRVKYLFEEVVAGIAGYGNCIGIPTVGGEVQFDPCYEGNPLVNAMCVGLINHEDIKKGQAHGAGNTVMYVGASTGRDGIHGATFASEELSESSEAKRPAVQVGDPFMEKLLIEACLELIQSDALVGIQDMGAAGLTSSSAEMASKAGMGIEMYLDDVPQRETGMTPYEMMLSESQERMLIVVKKGREQEIVDLFEKYDLAAVTMGKVTEDKMLRLFHKGEKVAEVPADALAEEAPIYHKPSKEAAYFAEFQAMKMETPKVENYKETLFALLQQPTIASKEWVYDQYDYQVRTSTVVTPGSDAAVVRVRGTEKGLAMTTDCNSRYIYLDPEMGGKIAVAEAARNIVCSGGEPLAITDCLNFGNPEKPEIFWQIEKSVDGMSEACRTLQTPVIGGNVSMYNERSGEAVYPTPTVGMVGLVHDLKHVTTQEFKQAGDLVYVIGETKAEFGGSELQKMIHGKIFGQSPSIDLDVELKRQKQVLEAIQAGLVQSAHDVAEGGLAVAISESAIGAKGLGATVKLDGEATAALFAESQSRFVITVKRENKEAFEKVVEAIQVGEVTSTNEVTIHNEENEVLLTANVDEMRKAWKGAIPCLLK.

Residue His54 is part of the active site. ATP is bound by residues Tyr57 and Lys96. Glu98 contacts Mg(2+). Residues Ser99–His102 and Arg121 each bind substrate. His100 functions as the Proton acceptor in the catalytic mechanism. Asp122 contributes to the Mg(2+) binding site. Residue Gln245 participates in substrate binding. Asp273 is a binding site for Mg(2+). A substrate-binding site is contributed by Glu317 to Gln319. 2 residues coordinate ATP: Asp500 and Gly537. Asn538 is a binding site for Mg(2+). Ser540 contributes to the substrate binding site.

This sequence belongs to the FGAMS family. Monomer. Part of the FGAM synthase complex composed of 1 PurL, 1 PurQ and 2 PurS subunits.

It localises to the cytoplasm. The enzyme catalyses N(2)-formyl-N(1)-(5-phospho-beta-D-ribosyl)glycinamide + L-glutamine + ATP + H2O = 2-formamido-N(1)-(5-O-phospho-beta-D-ribosyl)acetamidine + L-glutamate + ADP + phosphate + H(+). It participates in purine metabolism; IMP biosynthesis via de novo pathway; 5-amino-1-(5-phospho-D-ribosyl)imidazole from N(2)-formyl-N(1)-(5-phospho-D-ribosyl)glycinamide: step 1/2. Part of the phosphoribosylformylglycinamidine synthase complex involved in the purines biosynthetic pathway. Catalyzes the ATP-dependent conversion of formylglycinamide ribonucleotide (FGAR) and glutamine to yield formylglycinamidine ribonucleotide (FGAM) and glutamate. The FGAM synthase complex is composed of three subunits. PurQ produces an ammonia molecule by converting glutamine to glutamate. PurL transfers the ammonia molecule to FGAR to form FGAM in an ATP-dependent manner. PurS interacts with PurQ and PurL and is thought to assist in the transfer of the ammonia molecule from PurQ to PurL. The chain is Phosphoribosylformylglycinamidine synthase subunit PurL from Bacillus cereus (strain ATCC 14579 / DSM 31 / CCUG 7414 / JCM 2152 / NBRC 15305 / NCIMB 9373 / NCTC 2599 / NRRL B-3711).